The primary structure comprises 357 residues: Sulfate/thiosulfate import ATP-binding protein CysA (357 aa).

Residues 3-237 (IVIQNVSKSF…PKSPFVYDFL (235 aa)) enclose the ABC transporter domain. 35-42 (GPSGSGKT) contacts ATP.

It belongs to the ABC transporter superfamily. Sulfate/tungstate importer (TC 3.A.1.6) family. The complex is composed of two ATP-binding proteins (CysA), two transmembrane proteins (CysT and CysW) and a solute-binding protein (CysP).

The protein resides in the cell membrane. It catalyses the reaction sulfate(out) + ATP + H2O = sulfate(in) + ADP + phosphate + H(+). It carries out the reaction thiosulfate(out) + ATP + H2O = thiosulfate(in) + ADP + phosphate + H(+). Part of the ABC transporter complex CysAWTP involved in sulfate/thiosulfate import. Responsible for energy coupling to the transport system. This Halalkalibacterium halodurans (strain ATCC BAA-125 / DSM 18197 / FERM 7344 / JCM 9153 / C-125) (Bacillus halodurans) protein is Sulfate/thiosulfate import ATP-binding protein CysA.